Reading from the N-terminus, the 50-residue chain is U3-ctenitoxin-Asp1a (50 aa).

As to expression, expressed by the venom gland.

The protein resides in the secreted. Functionally, possible neurotoxin. This is U3-ctenitoxin-Asp1a from Ancylometes sp. (South American fishing spider).